A 152-amino-acid polypeptide reads, in one-letter code: MTAPRLISKYRIQIHRISENMVLNNDGLKEISTLLVSASDREPEVKLEKTKDNSSSDITTPPAEFIPSIFFSLHKIRKDPNNVSSQLETSTGFIRHRIKRCKALLQENEEVRNLLANSIEEWENIIADKEQQLRVKAKVLRDLDARIEKITN.

Residues 98 to 150 (IKRCKALLQENEEVRNLLANSIEEWENIIADKEQQLRVKAKVLRDLDARIEKI) adopt a coiled-coil conformation.

It belongs to the Mediator complex subunit 9 family. In terms of assembly, component of the Mediator complex.

The protein resides in the nucleus. Functionally, component of the Mediator complex, a coactivator involved in the regulated transcription of nearly all RNA polymerase II-dependent genes. Mediator functions as a bridge to convey information from gene-specific regulatory proteins to the basal RNA polymerase II transcription machinery. Mediator is recruited to promoters by direct interactions with regulatory proteins and serves as a scaffold for the assembly of a functional preinitiation complex with RNA polymerase II and the general transcription factors. This Candida glabrata (strain ATCC 2001 / BCRC 20586 / JCM 3761 / NBRC 0622 / NRRL Y-65 / CBS 138) (Yeast) protein is Mediator of RNA polymerase II transcription subunit 9 (CSE2).